The following is a 90-amino-acid chain: uncharacterized protein (90 aa).

Positions 1–18 (MKTLPVLVLSLTLLTVFS) are cleaved as a signal peptide. Positions 28 to 50 (QAKQLLRSRRQDRPSKPGFPDEP) are disordered.

The protein resides in the secreted. This is an uncharacterized protein from Homo sapiens (Human).